Here is a 183-residue protein sequence, read N- to C-terminus: Peptide deformylase (183 aa).

Fe cation is bound by residues Cys111 and His154. Glu155 is a catalytic residue. His158 is a binding site for Fe cation.

Requires Fe(2+) as cofactor.

The catalysed reaction is N-terminal N-formyl-L-methionyl-[peptide] + H2O = N-terminal L-methionyl-[peptide] + formate. Functionally, removes the formyl group from the N-terminal Met of newly synthesized proteins. Requires at least a dipeptide for an efficient rate of reaction. N-terminal L-methionine is a prerequisite for activity but the enzyme has broad specificity at other positions. The protein is Peptide deformylase of Staphylococcus aureus.